A 650-amino-acid chain; its full sequence is ATP-dependent zinc metalloprotease FtsH (650 aa).

The Cytoplasmic portion of the chain corresponds to 1–10 (MKTKKSKSTL). The chain crosses the membrane as a helical span at residues 11 to 31 (WFWLIILLAIIVTIIIIAVTV). Residues 32 to 123 (KGTTQVISDA…LVYQGSVGMA (92 aa)) lie on the Extracellular side of the membrane. A helical membrane pass occupies residues 124–144 (LLVSLAPLLIYVLLFGGIIWF). The Cytoplasmic segment spans residues 145 to 650 (MMKSSSGAGA…DIKVEDLDID (506 aa)). 217–224 (GPPGTGKT) lines the ATP pocket. Histidine 437 contacts Zn(2+). Residue glutamate 438 is part of the active site. Histidine 441 and aspartate 515 together coordinate Zn(2+).

It in the central section; belongs to the AAA ATPase family. In the C-terminal section; belongs to the peptidase M41 family. Homohexamer. Zn(2+) serves as cofactor.

The protein resides in the cell membrane. Its function is as follows. Acts as a processive, ATP-dependent zinc metallopeptidase for both cytoplasmic and membrane proteins. Plays a role in the quality control of integral membrane proteins. The chain is ATP-dependent zinc metalloprotease FtsH from Mesoplasma florum (strain ATCC 33453 / NBRC 100688 / NCTC 11704 / L1) (Acholeplasma florum).